The chain runs to 402 residues: MKLMTMPSEFQKALPILTKIKEAGYEAYFVGGSVRDVLLERPIHDVDIATSSYPEETKAIFNRTVDVGIEHGTVLVLENGGEYEITTFRTEDVYVDYRRPSQVSFVRSLEEDLKRRDFTVNALALDENGQVIDKFRGLIDLKQKRLRAVGKAEERFEEDALRIMRGFRFAASLDFDIEAATFEAMRSHSPLLEKISVERSFTEFDKLLMAPHWRKGISAMIACQAYDYLPGLKQQEAGLNHLIVSLKDNFTFSDHHQAWAYVMISLAIEDPKSFLKAWKTSNDFQRYVTKLIALYRIRQERSFEKLDIYQYGKEMASLVEDLRKAQSLSVDMDRINTLDQALVIHDKHDIVLNGSHLIKDFGMKPGPQLGLMLEKVELAIVEGRLDNDFTTIEAFVREELAP.

ATP contacts are provided by G32 and R35. Positions 32 and 35 each coordinate CTP. 2 residues coordinate Mg(2+): D45 and D47. R116, D159, R162, R165, and R168 together coordinate ATP. CTP contacts are provided by R116, D159, R162, R165, and R168.

It belongs to the tRNA nucleotidyltransferase/poly(A) polymerase family. Bacterial CCA-adding enzyme type 3 subfamily. Homodimer. Mg(2+) is required as a cofactor.

The enzyme catalyses a tRNA precursor + 2 CTP + ATP = a tRNA with a 3' CCA end + 3 diphosphate. It carries out the reaction a tRNA with a 3' CCA end + 2 CTP + ATP = a tRNA with a 3' CCACCA end + 3 diphosphate. In terms of biological role, catalyzes the addition and repair of the essential 3'-terminal CCA sequence in tRNAs without using a nucleic acid template. Adds these three nucleotides in the order of C, C, and A to the tRNA nucleotide-73, using CTP and ATP as substrates and producing inorganic pyrophosphate. tRNA 3'-terminal CCA addition is required both for tRNA processing and repair. Also involved in tRNA surveillance by mediating tandem CCA addition to generate a CCACCA at the 3' terminus of unstable tRNAs. While stable tRNAs receive only 3'-terminal CCA, unstable tRNAs are marked with CCACCA and rapidly degraded. The chain is CCA-adding enzyme from Streptococcus pyogenes serotype M6 (strain ATCC BAA-946 / MGAS10394).